The primary structure comprises 360 residues: Peptide chain release factor 1 (360 aa).

Gln235 carries the N5-methylglutamine modification. The span at Glu284–Arg295 shows a compositional bias: basic and acidic residues. The segment at Glu284–Thr309 is disordered.

Belongs to the prokaryotic/mitochondrial release factor family. In terms of processing, methylated by PrmC. Methylation increases the termination efficiency of RF1.

It is found in the cytoplasm. Functionally, peptide chain release factor 1 directs the termination of translation in response to the peptide chain termination codons UAG and UAA. The sequence is that of Peptide chain release factor 1 (prfA) from Pasteurella multocida (strain Pm70).